A 182-amino-acid chain; its full sequence is Probable peptidyl-prolyl cis-trans isomerase A (182 aa).

The region spanning 13 to 181 is the PPIase cyclophilin-type domain; the sequence is ATATATLHTN…DPVVIESITI (169 aa).

This sequence belongs to the cyclophilin-type PPIase family.

Its subcellular location is the cytoplasm. The enzyme catalyses [protein]-peptidylproline (omega=180) = [protein]-peptidylproline (omega=0). In terms of biological role, PPIases accelerate the folding of proteins. It catalyzes the cis-trans isomerization of proline imidic peptide bonds in oligopeptides. This Mycobacterium bovis (strain ATCC BAA-935 / AF2122/97) protein is Probable peptidyl-prolyl cis-trans isomerase A (ppiA).